The sequence spans 51 residues: Large ribosomal subunit protein bL33 (51 aa).

This sequence belongs to the bacterial ribosomal protein bL33 family.

This Acinetobacter baylyi (strain ATCC 33305 / BD413 / ADP1) protein is Large ribosomal subunit protein bL33.